The sequence spans 392 residues: Protein NolC (392 aa).

One can recognise a J domain in the interval 2–71 (KRDLYETLGV…RAAYDRYGHA (70 aa)). Disordered regions lie at residues 103–142 (RRDD…QDGA) and 157–244 (LGRE…TGLR). Residues 157–170 (LGREAGHQPEDLRH) show a composition bias toward basic and acidic residues. Residues 171–185 (LPGLRPYPRRPGLLL) show a composition bias toward low complexity. Over residues 186-203 (DRTHLPDLRRSRSDDHRS) the composition is skewed to basic and acidic residues. Positions 227 to 241 (HRGRHAYPPLRRGRT) are enriched in basic residues.

In Rhizobium fredii (Sinorhizobium fredii), this protein is Protein NolC (nolC).